Reading from the N-terminus, the 1399-residue chain is DNA-directed RNA polymerase subunit beta' (1399 aa).

The Zn(2+) site is built by cysteine 70, cysteine 72, cysteine 85, and cysteine 88. 3 residues coordinate Mg(2+): aspartate 460, aspartate 462, and aspartate 464. Residues cysteine 814, cysteine 888, cysteine 895, and cysteine 898 each contribute to the Zn(2+) site.

Belongs to the RNA polymerase beta' chain family. The RNAP catalytic core consists of 2 alpha, 1 beta, 1 beta' and 1 omega subunit. When a sigma factor is associated with the core the holoenzyme is formed, which can initiate transcription. Mg(2+) is required as a cofactor. It depends on Zn(2+) as a cofactor.

It carries out the reaction RNA(n) + a ribonucleoside 5'-triphosphate = RNA(n+1) + diphosphate. Its function is as follows. DNA-dependent RNA polymerase catalyzes the transcription of DNA into RNA using the four ribonucleoside triphosphates as substrates. In Stutzerimonas stutzeri (strain A1501) (Pseudomonas stutzeri), this protein is DNA-directed RNA polymerase subunit beta'.